The primary structure comprises 833 residues: Scavenger receptor class F member 2 (833 aa).

An N-terminal signal peptide occupies residues 1–33 (MEGAGSRGAGPARRQGARGLGLLLLLWLLPGLA). The Extracellular portion of the chain corresponds to 34–433 (APQDLNPRGR…ACHLETNQRK (400 aa)). EGF-like domains are found at residues 63 to 102 (LGDECGIAVCEGNSTCSENEVCVRPGECRCRHGYFGANCD), 114 to 145 (CKERCSCHPHGQCEDVTGQCTCHARRWGARCE), 140 to 174 (WGARCEHACQCQHGTCHPRSGACRCEPGWWGAQCA), 175 to 204 (SACYCSATSRCDPQTGACLCHVGWWGRSCN), 205 to 233 (NQCACNSSPCEQQSGRCQCRERMFGARCD), and 228 to 262 (FGARCDRYCQCSHGRCHPVDGTCACDPGYRGKYCR). 18 disulfide bridges follow: Cys-67–Cys-78, Cys-72–Cys-90, Cys-92–Cys-101, Cys-118–Cys-126, Cys-120–Cys-133, Cys-135–Cys-144, Cys-148–Cys-155, Cys-150–Cys-162, Cys-164–Cys-173, Cys-177–Cys-185, Cys-179–Cys-192, Cys-194–Cys-203, Cys-207–Cys-214, Cys-209–Cys-221, Cys-223–Cys-232, Cys-236–Cys-243, Cys-238–Cys-250, and Cys-252–Cys-261. Asn-75 carries N-linked (GlcNAc...) asparagine glycosylation. 2 N-linked (GlcNAc...) asparagine glycosylation sites follow: Asn-302 and Asn-357. Positions 364 to 395 (CAFVCSDCGSGHCDFQSGRCLCSPGVHGPHCN) constitute an EGF-like 7 domain. Intrachain disulfides connect Cys-368-Cys-376, Cys-371-Cys-383, and Cys-385-Cys-394. A glycan (N-linked (GlcNAc...) asparagine) is linked at Asn-395. Residues 434 to 454 (GVMGAGALLTLLLGLLLSLLG) traverse the membrane as a helical segment. The Cytoplasmic portion of the chain corresponds to 455–833 (CCCACRGKDS…SRAGTAPGAS (379 aa)). Residues Ser-538 and Ser-600 each carry the phosphoserine modification. A disordered region spans residues 578–833 (SLEPTGTSTP…SRAGTAPGAS (256 aa)). Position 615 is a phosphotyrosine (Tyr-615). The segment covering 619 to 630 (ARREARPARTRN) has biased composition (basic and acidic residues). A phosphoserine mark is found at Ser-638, Ser-640, and Ser-695. Thr-712 is subject to Phosphothreonine. Over residues 748–761 (ELRDKTRSLGRAEK) the composition is skewed to basic and acidic residues. Low complexity predominate over residues 781–798 (ASASEASGSEKAAASAPA). Over residues 804 to 816 (KKTPIQKPPRKKS) the composition is skewed to basic residues.

As to quaternary structure, homophilic and heterophilic interaction via its extracellular domain. Interacts with SCARF1. The heterophilic interaction with SCARF1, which is stronger than the homophilic interaction with itself, is suppressed by the presence of SCARF1 ligand such as Ac-LDL.

The protein resides in the membrane. Its function is as follows. Probable adhesion protein, which mediates homophilic and heterophilic interactions. In contrast to SCARF1, it poorly mediates the binding and degradation of acetylated low density lipoprotein (Ac-LDL). This chain is Scavenger receptor class F member 2 (Scarf2), found in Mus musculus (Mouse).